The primary structure comprises 257 residues: SQCKAMTVKFTVELDIERLTGQTYTDFIKNLRRSLATWYLHGVPVLPLYNQEADPRGFDLKLTFRGQVTTVRIHRDDLVLRGYQMQGAGKWLELERPSTQTGHLIEGSELLEFGPSYEELAAAAQQDILDISYNKNALQDAVSKLAVSTNTRDRARSLIVVSQMFCEATRFVDIANHFAFNLESSEPVKLPQWMQNDLEKNWVRFSFMILKSNADPCYKFEPQTIYGKIIKTADELLNFLGIVEQHPDTRSPPCAAG.

Glu167 is a catalytic residue. Cys217 and Cys254 form a disulfide bridge.

This sequence belongs to the ribosome-inactivating protein family. Type 1 RIP subfamily.

It carries out the reaction Endohydrolysis of the N-glycosidic bond at one specific adenosine on the 28S rRNA.. Functionally, inhibits translation in rabbit reticulocytes. In Drimia maritima (Sea squill), this protein is Ribosome-inactivating protein charybdin.